Here is a 523-residue protein sequence, read N- to C-terminus: Cilia- and flagella-associated protein 157 (523 aa).

A disordered region spans residues 1 to 31 (MAPKKKPNKGGKEMQGKKIGGKKDASGTKTP). Residues 10 to 26 (GGKEMQGKKIGGKKDAS) show a composition bias toward basic and acidic residues. At T30 the chain carries Phosphothreonine. Coiled-coil stretches lie at residues 32 to 191 (ELAM…LEKK), 248 to 274 (VQLLQENEQLKGTQNKLCQQLEMLENT), and 302 to 371 (GTEE…VLIQ). The segment at 419–440 (QPDMGSHQDKQPQGLSKESQRI) is disordered. The segment covering 429–440 (QPQGLSKESQRI) has biased composition (polar residues).

The protein belongs to the CFAP157 family. Interacts with TUBB and TUBA4A. Interacts with CEP350. As to expression, specifically expressed in tissues containing motile cilia.

It is found in the cytoplasm. It localises to the cytoskeleton. Its subcellular location is the cilium basal body. Its function is as follows. Specifically required during spermatogenesis for flagellum morphogenesis and sperm motility. May be required to suppress the formation of supernumerary axonemes and ensure a correct ultrastructure. The sequence is that of Cilia- and flagella-associated protein 157 from Mus musculus (Mouse).